The chain runs to 298 residues: Probable D,D-dipeptide transport system permease protein DdpC (298 aa).

The Cytoplasmic segment spans residues Met-1–Thr-33. Residues Val-34–Ala-54 traverse the membrane as a helical segment. The Periplasmic segment spans residues Thr-55–Ser-96. Residues Ile-97–Leu-117 form a helical membrane-spanning segment. The ABC transmembrane type-1 domain maps to Ile-97–Gly-282. At Ser-118–Arg-124 the chain is on the cytoplasmic side. 2 helical membrane-spanning segments follow: residues Ala-125 to Thr-145 and Met-146 to Val-166. Residues Arg-167–Gln-217 lie on the Cytoplasmic side of the membrane. A helical transmembrane segment spans residues Ala-218 to Gly-238. Residues Ala-239–Gln-260 are Periplasmic-facing. A helical transmembrane segment spans residues Trp-261–Phe-281. At Gly-282–Ser-298 the chain is on the cytoplasmic side.

Belongs to the binding-protein-dependent transport system permease family. OppBC subfamily. As to quaternary structure, the complex is composed of two ATP-binding proteins (DdpD and DdpF), two transmembrane proteins (DdpB and DdpC) and a solute-binding protein (DdpA).

The protein resides in the cell inner membrane. Its function is as follows. Part of the ABC transporter complex DdpABCDF, which is probably involved in D,D-dipeptide transport. Probably responsible for the translocation of the substrate across the membrane. The sequence is that of Probable D,D-dipeptide transport system permease protein DdpC (ddpC) from Escherichia coli (strain K12).